The primary structure comprises 496 residues: Transcription termination/antitermination protein NusA (496 aa).

The 66-residue stretch at G135 to S200 folds into the S1 motif domain. Residues C302–I370 enclose the KH domain. 2 consecutive repeat copies span residues N364–L414 and G440–C490. The interval N364–C490 is 2 X 51 AA approximate repeats.

The protein belongs to the NusA family. As to quaternary structure, monomer. Binds directly to the core enzyme of the DNA-dependent RNA polymerase and to nascent RNA.

The protein resides in the cytoplasm. In terms of biological role, participates in both transcription termination and antitermination. The chain is Transcription termination/antitermination protein NusA from Buchnera aphidicola subsp. Acyrthosiphon pisum (strain APS) (Acyrthosiphon pisum symbiotic bacterium).